The sequence spans 285 residues: tRNA-cytidine(32) 2-sulfurtransferase (285 aa).

Residues 49–54 (SGGKDS) carry the PP-loop motif motif. C124, C127, and C215 together coordinate [4Fe-4S] cluster.

This sequence belongs to the TtcA family. In terms of assembly, homodimer. It depends on Mg(2+) as a cofactor. Requires [4Fe-4S] cluster as cofactor.

Its subcellular location is the cytoplasm. The catalysed reaction is cytidine(32) in tRNA + S-sulfanyl-L-cysteinyl-[cysteine desulfurase] + AH2 + ATP = 2-thiocytidine(32) in tRNA + L-cysteinyl-[cysteine desulfurase] + A + AMP + diphosphate + H(+). Its pathway is tRNA modification. Catalyzes the ATP-dependent 2-thiolation of cytidine in position 32 of tRNA, to form 2-thiocytidine (s(2)C32). The sulfur atoms are provided by the cysteine/cysteine desulfurase (IscS) system. This chain is tRNA-cytidine(32) 2-sulfurtransferase, found in Hahella chejuensis (strain KCTC 2396).